The sequence spans 105 residues: uncharacterized protein (105 aa).

Residues 1–19 (MKLVFIFATAAIMGVVVYG) form the signal peptide.

This is an uncharacterized protein from Magallana gigas (Pacific oyster).